A 126-amino-acid chain; its full sequence is 13 kDa ribonucleoprotein-associated protein (126 aa).

This sequence belongs to the eukaryotic ribosomal protein eL8 family. As to quaternary structure, component of the U3 snoRNP particle. Binds to the C'/D and B/C motifs in U3 snoRNA. Component of the 25S U4/U6.U5 tri-snRNP particle, a subcomplex of the spliceosome. Binds to the 5' stem-loop of U4 snRNA.

It is found in the nucleus. Its subcellular location is the nucleolus. Common component of the spliceosome and rRNA processing machinery. In association with the spliceosomal U4/U6.U5 tri-snRNP particle, required for splicing of pre-mRNA. In association with box C/D snoRNPs, required for processing of pre-ribosomal RNA (rRNA) and site-specific 2'-O-methylation of substrate RNAs. Essential for the accumulation and stability of U4 snRNA, U6 snRNA, and box C/D snoRNAs. The polypeptide is 13 kDa ribonucleoprotein-associated protein (SNU13) (Yarrowia lipolytica (strain CLIB 122 / E 150) (Yeast)).